Reading from the N-terminus, the 435-residue chain is MLDSKLLRTELDETAAKLARRGFKLDVETIRTLEEQRKSIQVEVENLQSTRNSISKQIGQLMASGDKAGAEAVKQQIGTLGDDLDAKKVELDAVMAQLDAITQTVPNIPDDAVPNGKDDSENVEVSRWGTPKTYDFEVKDHVDLGEMGDGLDFASATKITGARFVVMKGQFARLHRAIAQFMLDLHTDQHGYTELYVPYLVNAETLFGTGQLPKFGQDLFHTEPLTEKASDEEPRRLSLIPTAEVPVTNLVRDTILDEAELPLKMTAHTPCFRSEAGSYGRDTRGLIRMHQFDKVELVQITRPEDSMAALEELTGHAEKVLQLLELPYRKVILCTGDMGFGSCKTYDLEVWVPAQKTYREISSCSNMWDFQARRMQARFRRKGEKKPELVHTLNGSGLAVGRTMVAILENYQEADGRIAIPAVLQKYMGGLTHIG.

242-244 (TAE) serves as a coordination point for L-serine. Position 273-275 (273-275 (RSE)) interacts with ATP. An L-serine-binding site is contributed by Glu-296. Position 360–363 (360–363 (EISS)) interacts with ATP. Residue Ser-396 coordinates L-serine.

It belongs to the class-II aminoacyl-tRNA synthetase family. Type-1 seryl-tRNA synthetase subfamily. As to quaternary structure, homodimer. The tRNA molecule binds across the dimer.

The protein localises to the cytoplasm. It catalyses the reaction tRNA(Ser) + L-serine + ATP = L-seryl-tRNA(Ser) + AMP + diphosphate + H(+). The catalysed reaction is tRNA(Sec) + L-serine + ATP = L-seryl-tRNA(Sec) + AMP + diphosphate + H(+). Its pathway is aminoacyl-tRNA biosynthesis; selenocysteinyl-tRNA(Sec) biosynthesis; L-seryl-tRNA(Sec) from L-serine and tRNA(Sec): step 1/1. Its function is as follows. Catalyzes the attachment of serine to tRNA(Ser). Is also able to aminoacylate tRNA(Sec) with serine, to form the misacylated tRNA L-seryl-tRNA(Sec), which will be further converted into selenocysteinyl-tRNA(Sec). The chain is Serine--tRNA ligase from Vibrio cholerae serotype O1 (strain ATCC 39541 / Classical Ogawa 395 / O395).